We begin with the raw amino-acid sequence, 204 residues long: Guanylate kinase (204 aa).

The region spanning 18–196 (PKLFTISAPA…SYEILKSIFI (179 aa)) is the Guanylate kinase-like domain. 25-32 (APAGAGKT) is an ATP binding site.

It belongs to the guanylate kinase family.

The protein resides in the cytoplasm. The catalysed reaction is GMP + ATP = GDP + ADP. Its function is as follows. Essential for recycling GMP and indirectly, cGMP. The chain is Guanylate kinase from Chlamydia felis (strain Fe/C-56) (Chlamydophila felis).